The following is a 626-amino-acid chain: Chaperone protein HtpG (626 aa).

Residues methionine 1–arginine 331 form an a; substrate-binding region. The interval glutamate 332–arginine 544 is b. Positions leucine 545–alanine 626 are c.

It belongs to the heat shock protein 90 family. Homodimer.

Its subcellular location is the cytoplasm. In terms of biological role, molecular chaperone. Has ATPase activity. The polypeptide is Chaperone protein HtpG (Methylorubrum extorquens (strain PA1) (Methylobacterium extorquens)).